We begin with the raw amino-acid sequence, 548 residues long: MDSQRNLLVIALLFVSFMIWQAWEQDKNPQPQAQQTTQTTTTAAGSAADQGVPASGQGKLISVKTDVLDLTINTRGGDVEQALLPAYPKELNSTQPFQLLETSPQFIYQAQSGLTGRDGPDNPANGPRPLYNVEKDAYVLAEGQNELQVPMTYTDAAGNTFTKTFVLKRGDYAVNVNYNVQNAGEKPLEISSFGQLKQSITLPPHLDTGSSNFALHTFRGAAYSTPDEKYEKYKFDTIADNENLNISSKGGWVAMLQQYFATAWIPHNDGTNNFYTANLGNGIAAIGYKSQPVLVQPGQTGAMNSTLWVGPEIQDKMAAVAPHLDLTVDYGWLWFISQPLFKLLKWIHSFVGNWGFSIIIITFIVRGIMYPLTKAQYTSMAKMRMLQPKIQAMRERLGDDKQRISQEMMALYKAEKVNPLGGCFPLLIQMPIFLALYYMLMGSVELRQAPFALWIHDLSAQDPYYILPILMGVTMFFIQKMSPTTVTDPMQQKIMTFMPVIFTVFFLWFPSGLVLYYIVSNLVTIIQQQLIYRGLEKRGLHSREKKKS.

A helical membrane pass occupies residues 6–26 (NLLVIALLFVSFMIWQAWEQD). Residues 28–55 (NPQPQAQQTTQTTTTAAGSAADQGVPAS) are disordered. The segment covering 30-50 (QPQAQQTTQTTTTAAGSAADQ) has biased composition (low complexity). 4 helical membrane-spanning segments follow: residues 350 to 370 (FVGNWGFSIIIITFIVRGIMY), 420 to 440 (LGGCFPLLIQMPIFLALYYML), 458 to 478 (LSAQDPYYILPILMGVTMFFI), and 499 to 519 (PVIFTVFFLWFPSGLVLYYIV).

It belongs to the OXA1/ALB3/YidC family. Type 1 subfamily. In terms of assembly, interacts with the Sec translocase complex via SecD. Specifically interacts with transmembrane segments of nascent integral membrane proteins during membrane integration.

The protein localises to the cell inner membrane. Its function is as follows. Required for the insertion and/or proper folding and/or complex formation of integral membrane proteins into the membrane. Involved in integration of membrane proteins that insert both dependently and independently of the Sec translocase complex, as well as at least some lipoproteins. Aids folding of multispanning membrane proteins. The polypeptide is Membrane protein insertase YidC (Escherichia coli (strain K12 / MC4100 / BW2952)).